We begin with the raw amino-acid sequence, 540 residues long: CBL-interacting protein kinase 12 (540 aa).

Residues 1 to 23 form a disordered region; the sequence is MLMATVSPARREPTPQAVRASPM. The Protein kinase domain occupies 46-300; it reads YELGRVLGQG…VPEIIESDWF (255 aa). ATP is bound by residues 52–60 and Lys75; that span reads LGQGSFAKV. Asp168 serves as the catalytic Proton acceptor. The activation loop stretch occupies residues 186–215; sequence DFGLAAGPDQFDPDGLLHTFCGTPAYVAPE. A compositionally biased stretch (pro residues) spans 333–348; sequence PPPLGLAPPVPPPPQG. The segment at 333 to 380 is disordered; sequence PPPLGLAPPVPPPPQGDDPDGSGSESDSSVVSCPATLSTGESQRVRGS. Residues 353–364 show a composition bias toward low complexity; that stretch reads GSGSESDSSVVS. One can recognise an NAF domain in the interval 370-406; it reads STGESQRVRGSLPRPASLNAFDIISFSKGFNLSGLFE. The PPI stretch occupies residues 409-438; that stretch reads GNEIRFVSGEPMSDIVKKLEEIAKVKSFTV.

This sequence belongs to the protein kinase superfamily. CAMK Ser/Thr protein kinase family. SNF1 subfamily. Mg(2+) serves as cofactor. Autophosphorylated. Expressed at low levels in leaf blades.

It carries out the reaction L-seryl-[protein] + ATP = O-phospho-L-seryl-[protein] + ADP + H(+). The enzyme catalyses L-threonyl-[protein] + ATP = O-phospho-L-threonyl-[protein] + ADP + H(+). In terms of biological role, involved in drought stress tolerance. CIPK serine-threonine protein kinases interact with CBL proteins. Binding of a CBL protein to the regulatory NAF domain of CIPK protein lead to the activation of the kinase in a calcium-dependent manner. The sequence is that of CBL-interacting protein kinase 12 (CIPK12) from Oryza sativa subsp. japonica (Rice).